Here is a 96-residue protein sequence, read N- to C-terminus: Co-chaperonin GroES (96 aa).

This sequence belongs to the GroES chaperonin family. As to quaternary structure, heptamer of 7 subunits arranged in a ring. Interacts with the chaperonin GroEL.

The protein localises to the cytoplasm. In terms of biological role, together with the chaperonin GroEL, plays an essential role in assisting protein folding. The GroEL-GroES system forms a nano-cage that allows encapsulation of the non-native substrate proteins and provides a physical environment optimized to promote and accelerate protein folding. GroES binds to the apical surface of the GroEL ring, thereby capping the opening of the GroEL channel. The protein is Co-chaperonin GroES of Hyphomonas neptunium (strain ATCC 15444).